The chain runs to 86 residues: Large ribosomal subunit protein bL31 (86 aa).

This sequence belongs to the bacterial ribosomal protein bL31 family. Type A subfamily. In terms of assembly, part of the 50S ribosomal subunit.

Functionally, binds the 23S rRNA. This chain is Large ribosomal subunit protein bL31, found in Parasynechococcus marenigrum (strain WH8102).